The primary structure comprises 324 residues: Olfactory receptor 7G2 (324 aa).

Topologically, residues 1–25 (MEARNQTAISKFLLLGLIEDPELQP) are extracellular. N-linked (GlcNAc...) asparagine glycosylation occurs at Asn-5. A helical membrane pass occupies residues 26–46 (VLFSLFLSMYLVTILGNLLIL). Topologically, residues 47-54 (LAVISDSH) are cytoplasmic. Residues 55 to 75 (LHTPMYFFLSNLSFLDICLST) form a helical membrane-spanning segment. The Extracellular portion of the chain corresponds to 76 to 99 (TTIPKMLVNIQAQNRSITYSGCLT). An N-linked (GlcNAc...) asparagine glycan is attached at Asn-89. The cysteines at positions 97 and 189 are disulfide-linked. The chain crosses the membrane as a helical span at residues 100–120 (QICFVLFFAGLENCLLAAMAY). Residues 121-139 (DRYVAICHPLRYTVIMNPR) lie on the Cytoplasmic side of the membrane. Residues 140–160 (LCGLLILLSLLTSVVNALLLS) form a helical membrane-spanning segment. Residues 161-197 (LMVLRLSFCTDLEIPLFFCELAQVIQLTCSDTLINNI) lie on the Extracellular side of the membrane. Residues 198-217 (LIYFAACIFGGVPLSGIILS) form a helical membrane-spanning segment. Topologically, residues 218-237 (YTQITSCVLRMPSASGKHKA) are cytoplasmic. The helical transmembrane segment at 238 to 258 (VSTCGSHLSIVLLFYGAGLGV) threads the bilayer. Residues 259 to 271 (YISSVVTDSPRKT) lie on the Extracellular side of the membrane. Residues 272-292 (AVASVMYSVFPQMVNPFIYSL) form a helical membrane-spanning segment. The Cytoplasmic portion of the chain corresponds to 293–324 (RNKDMKGTLRKFIGRIPSLLWCAICFGFRFLE).

Belongs to the G-protein coupled receptor 1 family.

The protein resides in the cell membrane. In terms of biological role, odorant receptor. The protein is Olfactory receptor 7G2 (OR7G2) of Homo sapiens (Human).